A 574-amino-acid chain; its full sequence is Phosphatidylinositol 4-kinase gamma 3 (574 aa).

2 consecutive Ubiquitin-like domains span residues 32-109 and 110-188; these read PILV…SDLQ and AISV…AKVR. Positions 257–555 constitute a PI3K/PI4K catalytic domain; that stretch reads GNGPIRSSDG…IVPTETTEDE (299 aa). Residues 263–269 form a G-loop region; that stretch reads SSDGSGG. Residues 264 to 270, K286, and 381 to 384 each bind ATP; these read SDGSGGA and QMFV. The interval 414 to 422 is catalytic loop; sequence ANADRHAGN. Positions 438-464 are activation loop; sequence PIDHGYCFPNKFEDCTFEWLYWPQAKE. Residue D440 participates in ATP binding.

The protein belongs to the PI3/PI4-kinase family. Type II PI4K subfamily.

The catalysed reaction is a 1,2-diacyl-sn-glycero-3-phospho-(1D-myo-inositol) + ATP = a 1,2-diacyl-sn-glycero-3-phospho-(1D-myo-inositol 4-phosphate) + ADP + H(+). In terms of biological role, the phosphorylation of phosphatidylinositol (PI) to PI4P is the first committed step in the generation of phosphatidylinositol 4,5-bisphosphate (PIP2), a precursor of the second messenger inositol 1,4,5-trisphosphate (InsP3). This Arabidopsis thaliana (Mouse-ear cress) protein is Phosphatidylinositol 4-kinase gamma 3 (PI4KG3).